We begin with the raw amino-acid sequence, 435 residues long: Trigger factor (435 aa).

The 81-residue stretch at 183–263 folds into the PPIase FKBP-type domain; sequence GDFINVDVTI…VKTIWQGNMP (81 aa).

Belongs to the FKBP-type PPIase family. Tig subfamily.

The protein localises to the cytoplasm. The enzyme catalyses [protein]-peptidylproline (omega=180) = [protein]-peptidylproline (omega=0). Its function is as follows. Involved in protein export. Acts as a chaperone by maintaining the newly synthesized protein in an open conformation. Functions as a peptidyl-prolyl cis-trans isomerase. This chain is Trigger factor, found in Protochlamydia amoebophila (strain UWE25).